We begin with the raw amino-acid sequence, 160 residues long: DNA polymerase delta subunit 4 (160 aa).

Positions 1–48 (MKKRTTQAKKSGQNTNIRDVFPHVVRSNSSQSHIGKKVSSEQSPTPDV) are disordered. Residues 8–17 (AKKSGQNTNI) are compositionally biased toward polar residues.

This sequence belongs to the DNA polymerase delta subunit 4 family. As to quaternary structure, heterotetramer that consist of the pol3, cdc1, cdc27 and cdm1 subunits. Interacts with cdc1 and pol3.

It localises to the nucleus. Its function is as follows. Appears to have a role in the stabilization of the DNA polymerase delta complex. This Schizosaccharomyces pombe (strain 972 / ATCC 24843) (Fission yeast) protein is DNA polymerase delta subunit 4 (cdm1).